Consider the following 415-residue polypeptide: Dynein assembly factor with WD repeat domains 1 (415 aa).

8 WD repeats span residues 90-129, 132-174, 175-214, 217-256, 259-298, 301-340, 343-384, and 386-415; these read AHILPLTNVAFNKSGSSFITGSYDRTCKVWDTASGEELHT, GHRN…HTFR, GHTAEIVCLVFNPQSTLIATGSMDTTAKLWDIQSGEEALT, GHAAEIISLSFNTTGDRLITGSFDHTVSVWEIPSGRRIHT, GHRGEISSAQFNWDCSLIATASMDKSCKLWDSLNGKCVAT, GHDDEVLDVTFDSTGQLVATASADGTARVYSASSRKCLAK, GHEG…QVLK, and HTDEIFSCAFNYEGNTIITGSKDNTCRIWR.

Belongs to the WD repeat WDR69 family.

It localises to the cytoplasm. The protein localises to the cytoskeleton. The protein resides in the flagellum basal body. Its subcellular location is the flagellum axoneme. Functionally, required for axonemal dynein assembly and ciliary motility in ciliated organs, including Kupffer's vesicle, during embryogenesis. Facilitates the onset of robust cilia motility during development. This is Dynein assembly factor with WD repeat domains 1 (daw1) from Xenopus laevis (African clawed frog).